Here is a 35-residue protein sequence, read N- to C-terminus: Ranatuerin-2SPb (35 aa).

An intrachain disulfide couples cysteine 28 to cysteine 33.

As to expression, expressed by the skin glands.

Its subcellular location is the secreted. Its function is as follows. Antibacterial activity against Gram-positive bacterium S.aureus. Shows no detectable hemolytic activity towards human erythrocytes. This chain is Ranatuerin-2SPb, found in Lithobates septentrionalis (Mink frog).